The following is a 227-amino-acid chain: uncharacterized protein (227 aa).

Positions 1 to 23 (MKKRFSLIMMTGLLFGLTSPAFA) are cleaved as a signal peptide. The region spanning 36-227 (NVAVLLDASG…FTQQSLMLSK (192 aa)) is the VWFA domain.

It to B.subtilis YwmD.

This is an uncharacterized protein from Bacillus subtilis (strain 168).